The following is an 81-amino-acid chain: Trefoil factor 1 (81 aa).

The first 23 residues, 1 to 23 (MEHRVIYVLVLVCALTLSSLAQG), serve as a signal peptide directing secretion. Residues 26 to 69 (ETCTVAPHHRDNCGSPGITPSQCKDKGCCFDNTVRGVPWCYYPV) form the P-type domain. Disulfide bonds link C28–C54, C38–C53, and C48–C65.

Its subcellular location is the secreted. Stabilizer of the mucous gel overlying the gastrointestinal mucosa that provides a physical barrier against various noxious agents. This chain is Trefoil factor 1 (TFF1), found in Canis lupus familiaris (Dog).